A 260-amino-acid polypeptide reads, in one-letter code: Factor V activator RVV-V gamma (260 aa).

Residues 1-18 form the signal peptide; sequence MVLIKVLANLLVLQLSYA. Residues 19–24 constitute a propeptide that is removed on maturation; that stretch reads QKSSEL. The Peptidase S1 domain occupies 25 to 251; sequence VVGGDECNIN…YNNWIQSIIA (227 aa). 6 disulfides stabilise this stretch: Cys-31–Cys-165, Cys-52–Cys-68, Cys-100–Cys-258, Cys-144–Cys-212, Cys-176–Cys-191, and Cys-202–Cys-227. Active-site charge relay system residues include His-67 and Asp-112. The active-site Charge relay system is Ser-206. Asn-253 carries N-linked (GlcNAc...) asparagine glycosylation.

This sequence belongs to the peptidase S1 family. Snake venom subfamily. In terms of assembly, monomer. Expressed by the venom gland.

It is found in the secreted. The enzyme catalyses Fully activates human clotting factor V by a single cleavage at the 1545-Trp-Tyr-Leu-Arg-|-Ser-Asn-Asn-Gly-1552 bond. Cattle, but not rabbit, factor V is cleaved, and no other proteins of the clotting system are attacked. Esterase activity is observed on Bz-Arg-OEt and Tos-Arg-OMe, and amidase activity on Phe-pipecolyl-Arg-NHPhNO2.. Functionally, venom serine protease that selectively activates factor V (F5) in a calcium-independent manner. It cleaves the Arg(1545)-Ser(1546) linkage in the human factor V molecule. Induces the coagulation of mammalian plasma. This Daboia siamensis (Eastern Russel's viper) protein is Factor V activator RVV-V gamma.